A 259-amino-acid polypeptide reads, in one-letter code: DNA-directed RNA polymerase 30 kDa polypeptide (259 aa).

Residues 155 to 195 form a TFIIS-type zinc finger; the sequence is YNTPCPNCKSRNTTPMMIQTRAADEPPLVRHACRDCKQHFK. Zn(2+)-binding residues include cysteine 159, cysteine 162, cysteine 187, and cysteine 190. Positions 220–259 are disordered; the sequence is EILPDNNPSPPESPEPASPIDDGLIRATFDRNDEPPEDDE. Over residues 226 to 236 the composition is skewed to pro residues; it reads NPSPPESPEPA.

The protein belongs to the poxviridae DNA-directed RNA polymerase 30 kDa subunit family. The DNA-dependent RNA polymerase (vRNAP) consists of eight subunits encoded by early viral genes and termed according to their apparent molecular masses Rpo147, Rpo132, Rpo35, Rpo30, Rpo22, Rpo19, Rpo18, and Rpo7. The same holoenzyme, with the addition of the transcription-specificity factor RAP94, is used for early gene expression.

It localises to the virion. It is found in the host cytoplasm. It catalyses the reaction RNA(n) + a ribonucleoside 5'-triphosphate = RNA(n+1) + diphosphate. Functionally, part of the DNA-dependent RNA polymerase which catalyzes the transcription of viral DNA into RNA using the four ribonucleoside triphosphates as substrates. Responsible for the transcription of early, intermediate and late genes. DNA-dependent RNA polymerase associates with the early transcription factor (ETF), itself composed of OPG118 and OPG134, thereby allowing the early genes transcription. Late transcription, and probably also intermediate transcription, require newly synthesized RNA polymerase. This is DNA-directed RNA polymerase 30 kDa polypeptide (OPG066) from Homo sapiens (Human).